The following is a 472-amino-acid chain: Serine/threonine-protein phosphatase T (472 aa).

3 TPR repeats span residues alanine 7–proline 40, threonine 41–phenylalanine 73, and alanine 74–asparagine 107. 4 residues coordinate Mn(2+): aspartate 217, histidine 219, aspartate 246, and asparagine 278. Catalysis depends on histidine 279, which acts as the Proton donor/acceptor. Residues histidine 327 and histidine 403 each contribute to the Mn(2+) site.

Belongs to the PPP phosphatase family. PP-5 (PP-T) subfamily. Mg(2+) serves as cofactor. It depends on Mn(2+) as a cofactor.

It is found in the cytoplasm. The protein localises to the cytosol. It localises to the nucleus. The catalysed reaction is O-phospho-L-seryl-[protein] + H2O = L-seryl-[protein] + phosphate. It catalyses the reaction O-phospho-L-threonyl-[protein] + H2O = L-threonyl-[protein] + phosphate. With respect to regulation, activated by arachidonic acid. May function as a protein phosphatase. The protein is Serine/threonine-protein phosphatase T of Trypanosoma brucei brucei (strain 927/4 GUTat10.1).